The following is a 266-amino-acid chain: Interleukin-1 beta (266 aa).

Positions 1-114 are excised as a propeptide; the sequence is MAAVPELSSE…DTWDEEYESD (114 aa).

This sequence belongs to the IL-1 family. In terms of assembly, monomer. In its precursor form, weakly interacts with full-length MEFV; the mature cytokine does not interact at all. Interacts with integrins ITGAV:ITGBV and ITGA5:ITGB1; integrin-binding is required for IL1B signaling. Interacts with cargo receptor TMED10; the interaction is direct and is required for the secretion of IL1B mature form. Interacts with HSP90AB1; the interaction facilitates cargo translocation into the ERGIC. Interacts with HSP90B1; the interaction facilitates cargo translocation into the ERGIC.

It localises to the cytoplasm. The protein localises to the cytosol. The protein resides in the secreted. It is found in the lysosome. Its subcellular location is the extracellular exosome. Potent pro-inflammatory cytokine. Initially discovered as the major endogenous pyrogen, induces prostaglandin synthesis, neutrophil influx and activation, T-cell activation and cytokine production, B-cell activation and antibody production, and fibroblast proliferation and collagen production. Promotes Th17 differentiation of T-cells. Synergizes with IL12/interleukin-12 to induce IFNG synthesis from T-helper 1 (Th1) cells. Plays a role in angiogenesis by inducing VEGF production synergistically with TNF and IL6. Involved in transduction of inflammation downstream of pyroptosis: its mature form is specifically released in the extracellular milieu by passing through the gasdermin-D (GSDMD) pore. This Cavia porcellus (Guinea pig) protein is Interleukin-1 beta (IL1B).